Here is a 239-residue protein sequence, read N- to C-terminus: Ribonuclease PH (239 aa).

Phosphate is bound by residues Arg87 and 125–127; that span reads GTR.

This sequence belongs to the RNase PH family. In terms of assembly, homohexameric ring arranged as a trimer of dimers.

It carries out the reaction tRNA(n+1) + phosphate = tRNA(n) + a ribonucleoside 5'-diphosphate. Functionally, phosphorolytic 3'-5' exoribonuclease that plays an important role in tRNA 3'-end maturation. Removes nucleotide residues following the 3'-CCA terminus of tRNAs; can also add nucleotides to the ends of RNA molecules by using nucleoside diphosphates as substrates, but this may not be physiologically important. Probably plays a role in initiation of 16S rRNA degradation (leading to ribosome degradation) during starvation. This Ectopseudomonas mendocina (strain ymp) (Pseudomonas mendocina) protein is Ribonuclease PH.